A 408-amino-acid polypeptide reads, in one-letter code: MRSSCVLLAALLALAAYYVYIPLPSAVSDPWKLMLLDATFRGAQQVSNLIHSLGLNHHLIALNFIITSFGKQSARSSPKVKVTDTDFDGVEVRVFEGSPKPEEPLRRSVIYIHGGGWALASAKISYYDQLCTTMAEELNAVIVSIEYRLVPQVYFPEQIHDVIRATKYFLQPEVLDKYKVDPGRVGISGDSAGGNLAAALGQQFTYVASLKNKLKLQALVYPVLQALDFNTPSYQQSMNTPILPRHVMVRYWLDYFKGNYDFVEAMIVNNHTSLDVERAAALRARLDWTSLLPSSIKKNYKPIMQTTGNARIVQEIPQLLDAAASPLIAEQEVLEALPKTYILTCEHDVLRDDGIMYAKRLESAGVNVTLDHFEDGFHGCMIFTSWPTNFSVGIRTRNSYIKWLDQNL.

Over 1-4 the chain is Cytoplasmic; the sequence is MRSS. The chain crosses the membrane as a helical; Signal-anchor for type II membrane protein span at residues 5–25; sequence CVLLAALLALAAYYVYIPLPS. Topologically, residues 26–408 are lumenal; the sequence is AVSDPWKLML…SYIKWLDQNL (383 aa). The short motif at 113-115 is the Involved in the stabilization of the negatively charged intermediate by the formation of the oxyanion hole element; the sequence is HGG. Ser-191 is a catalytic residue. N-linked (GlcNAc...) asparagine glycosylation is present at Asn-270. The active site involves Asp-348. A glycan (N-linked (GlcNAc...) asparagine) is linked at Asn-367. His-378 is a catalytic residue. Asn-389 carries N-linked (GlcNAc...) asparagine glycosylation.

Belongs to the 'GDXG' lipolytic enzyme family. In terms of processing, N-glycosylated. As to expression, present in brain, heart, kidney, lung, spinal cord and testis but not liver (at protein level). Expressed in peritoneal macrophages and kidney.

It localises to the cell membrane. The protein localises to the microsome. The enzyme catalyses a 1-O-alkyl-2-acetyl-sn-glycerol + H2O = a 1-O-alkyl-sn-glycerol + acetate + H(+). It catalyses the reaction 1-O-hexadecyl-2-acetyl-sn-glycerol + H2O = 1-O-hexadecyl-sn-glycerol + acetate + H(+). The catalysed reaction is a cholesterol ester + H2O = cholesterol + a fatty acid + H(+). It carries out the reaction cholesteryl (9Z-octadecenoate) + H2O = cholesterol + (9Z)-octadecenoate + H(+). With respect to regulation, inhibited by bulky trifluoromethyl ketones. Functionally, hydrolyzes 2-acetyl monoalkylglycerol ether (1-O-alkyl-2-acetyl-sn-glycerol), the penultimate precursor of the pathway for de novo synthesis of platelet-activating factor. May be responsible for the hydrolysis of cholesterol esters (such as cholesteryl (9Z-octadecenoate)) in macrophages. Also involved in organ detoxification by hydrolyzing exogenous organophosphorus compounds. The polypeptide is Neutral cholesterol ester hydrolase 1 (Nceh1) (Mus musculus (Mouse)).